We begin with the raw amino-acid sequence, 1165 residues long: ATP-dependent helicase/deoxyribonuclease subunit B (1165 aa).

Positions 1 to 298 (MALRFILGRA…AHLEREFFRR (298 aa)) constitute a UvrD-like helicase ATP-binding domain. 8-15 (GRAGTGKT) contributes to the ATP binding site. The region spanning 279–584 (PARFRANPAL…QLALIPPALD (306 aa)) is the UvrD-like helicase C-terminal domain. Residues C800, C1119, C1122, and C1128 each coordinate [4Fe-4S] cluster.

This sequence belongs to the helicase family. AddB/RexB type 1 subfamily. In terms of assembly, heterodimer of AddA and AddB. Requires Mg(2+) as cofactor. [4Fe-4S] cluster serves as cofactor.

Functionally, the heterodimer acts as both an ATP-dependent DNA helicase and an ATP-dependent, dual-direction single-stranded exonuclease. Recognizes the chi site generating a DNA molecule suitable for the initiation of homologous recombination. The AddB subunit has 5' -&gt; 3' nuclease activity but not helicase activity. The protein is ATP-dependent helicase/deoxyribonuclease subunit B of Desulforudis audaxviator (strain MP104C).